A 611-amino-acid polypeptide reads, in one-letter code: Elongation factor 4 (611 aa).

One can recognise a tr-type G domain in the interval 12-194; sequence SRIRNFSIIA…QIVEKVPAPA (183 aa). GTP-binding positions include 24-29 and 141-144; these read DHGKST and NKID.

This sequence belongs to the TRAFAC class translation factor GTPase superfamily. Classic translation factor GTPase family. LepA subfamily.

It localises to the cell membrane. It catalyses the reaction GTP + H2O = GDP + phosphate + H(+). Its function is as follows. Required for accurate and efficient protein synthesis under certain stress conditions. May act as a fidelity factor of the translation reaction, by catalyzing a one-codon backward translocation of tRNAs on improperly translocated ribosomes. Back-translocation proceeds from a post-translocation (POST) complex to a pre-translocation (PRE) complex, thus giving elongation factor G a second chance to translocate the tRNAs correctly. Binds to ribosomes in a GTP-dependent manner. The chain is Elongation factor 4 from Bacillus velezensis (strain DSM 23117 / BGSC 10A6 / LMG 26770 / FZB42) (Bacillus amyloliquefaciens subsp. plantarum).